We begin with the raw amino-acid sequence, 1885 residues long: Chitin synthase 5 (1885 aa).

The 789-residue stretch at 1–789 (MATRGNVPAH…SIALTGSQAA (789 aa)) folds into the Myosin motor domain. Position 99–106 (99–106 (GESGSGKT)) interacts with ATP. N-linked (GlcNAc...) asparagine glycosylation is found at Asn-219 and Asn-429. The disordered stretch occupies residues 601 to 649 (KPLRMPSVSRKKHDQLRRMASRRADRSPAPQEEEPLPGTEEAKVRRTKP). Positions 609–621 (SRKKHDQLRRMAS) are enriched in basic residues. The actin-binding stretch occupies residues 666 to 690 (LDNITKSLTAPNVNNYFVFCLKPND). An N-linked (GlcNAc...) asparagine glycan is attached at Asn-668. Positions 794-817 (GDIGSPSRPDTPGHNPFSDSKARL) are disordered. 2 helical membrane-spanning segments follow: residues 894-914 (WLAI…KWIG) and 929-949 (FAIN…IIVF). The Cytochrome b5 heme-binding domain occupies 957–1016 (QNVYSAAELSAHDGKGKHSAYVAIRGQVFDLGAFMPNHYPKIIPQSSLKKYAGVDATGLF). N-linked (GlcNAc...) asparagine glycosylation is found at Asn-1043 and Asn-1068. Residues 1205-1225 (ILLAVSILLCSVIGFKFFAAL) traverse the membrane as a helical segment. Asn-1462 and Asn-1568 each carry an N-linked (GlcNAc...) asparagine glycan. 3 helical membrane-spanning segments follow: residues 1599–1619 (LLST…IVLL), 1626–1646 (VPLT…IIFI), and 1653–1673 (MIGW…GLPL). N-linked (GlcNAc...) asparagine glycans are attached at residues Asn-1759 and Asn-1790. Residues 1827-1882 (LPTDDMLLNEIRDILRTADLMTVTKKGIKQELERRFNVNLDMKRAYIGSATEAILS) enclose the DEK-C domain.

It in the N-terminal section; belongs to the TRAFAC class myosin-kinesin ATPase superfamily. Myosin family. This sequence in the C-terminal section; belongs to the chitin synthase family. Class V subfamily. Maximal activity requires trypsin activation, suggesting a zymogenic nature.

The protein localises to the cell membrane. The protein resides in the membrane. The enzyme catalyses [(1-&gt;4)-N-acetyl-beta-D-glucosaminyl](n) + UDP-N-acetyl-alpha-D-glucosamine = [(1-&gt;4)-N-acetyl-beta-D-glucosaminyl](n+1) + UDP + H(+). In terms of biological role, polymerizes chitin, a structural polymer of the cell wall and septum, by transferring the sugar moiety of UDP-GlcNAc to the non-reducing end of the growing chitin polymer. CHS5 is required for the sustained growth at 37 degrees Celsius and is of critical importance for virulence. Especially important at infection temperatures for maintaining the cell wall integrity of developing yeast buds, elongating tips of hyphae, and random sites of expansion in sclerotic forms. In Exophiala dermatitidis (Black yeast-like fungus), this protein is Chitin synthase 5.